A 244-amino-acid polypeptide reads, in one-letter code: 5-oxoprolinase subunit A (244 aa).

This sequence belongs to the LamB/PxpA family. As to quaternary structure, forms a complex composed of PxpA, PxpB and PxpC.

The enzyme catalyses 5-oxo-L-proline + ATP + 2 H2O = L-glutamate + ADP + phosphate + H(+). Catalyzes the cleavage of 5-oxoproline to form L-glutamate coupled to the hydrolysis of ATP to ADP and inorganic phosphate. This is 5-oxoprolinase subunit A from Shigella sonnei (strain Ss046).